Reading from the N-terminus, the 280-residue chain is 3-phenylpropionate-dihydrodiol/cinnamic acid-dihydrodiol dehydrogenase (280 aa).

Substrate is bound at residue Ser143. Tyr156 functions as the Proton acceptor in the catalytic mechanism.

It belongs to the short-chain dehydrogenases/reductases (SDR) family.

It catalyses the reaction 3-(cis-5,6-dihydroxycyclohexa-1,3-dien-1-yl)propanoate + NAD(+) = 3-(2,3-dihydroxyphenyl)propanoate + NADH + H(+). It carries out the reaction (2E)-3-(cis-5,6-dihydroxycyclohexa-1,3-dien-1-yl)prop-2-enoate + NAD(+) = (2E)-3-(2,3-dihydroxyphenyl)prop-2-enoate + NADH + H(+). It participates in aromatic compound metabolism; 3-phenylpropanoate degradation. In terms of biological role, converts 3-phenylpropionate-dihydrodiol (PP-dihydrodiol) and cinnamic acid-dihydrodiol (CI-dihydrodiol) into 3-(2,3-dihydroxylphenyl)propanoic acid (DHPP) and 2,3-dihydroxicinnamic acid (DHCI), respectively. This is 3-phenylpropionate-dihydrodiol/cinnamic acid-dihydrodiol dehydrogenase from Photorhabdus laumondii subsp. laumondii (strain DSM 15139 / CIP 105565 / TT01) (Photorhabdus luminescens subsp. laumondii).